We begin with the raw amino-acid sequence, 832 residues long: MSDTDGKKTLGLRGGSRTGQVKQSFSHGRTKNVVVETKRKRVLVPKPGASASGGRGSDPKKPGNATDAEMERRLRALRAAKANESEEAERRAAEEKAREEERARRRAEIEAKEREEQEREERARQKAEEEEEARKKAEADASSKPAAARSKADDPATMDPAAAQAAEARGAGKTGSGPRKERTADRAQPRKEQKGKGDDRRRSGKLTLNQALSGDGGRQKSMAAMKRKQERERRKAMGGSQEREKIVRDVQLPETIVVQELANRMAERVADVVKALMKMGMMVTQNQSIDADTAELIIEEFGHKVVRVSDADVEDVIATVEDDPADMQPRPPVITVMGHVDHGKTSLLDAIRNAKVVAGEAGGITQHIGAYQVTTDDGTKLSFLDTPGHAAFTSMRARGAQVTDIVVLVVAADDAVMPQTIEAINHAKAAKVPMIVAINKIDRPEANPDKVRTDLLQHEVIVEKLSGDVQDVEVSAINGTGLDQLLESIALQAEILELKANPDRAAEGAVIEAQLDVGRGPVATVLVQKGTLRRGDIFVVGEQWGKVRALINDQGERVDEAGPSVPVEVLGLNGTPEAGDVLNVVETEAQAREIAEYRESAAKEKRAAAGAATTLEQLMAKAKSDETVAELPIVVKADVQGSAEAIVQTMEKIGNEEVRVRVLHSGVGAITESDIGLAEASGAPVFGFNVRANAPARNAAQQKGVEIRYYSIIYDLVDDVKAAASGLLSAEVRENFIGYAEIREVFKVSGVGKVAGCLVTDGIARRSAGVRLLRDNVVIHEGTLKTLKRFKDEVKEVQSGQECGMAFENYDDIRPGDVIEIFEREEVERNLE.

Positions 1–244 (MSDTDGKKTL…KAMGGSQERE (244 aa)) are disordered. Positions 18–27 (TGQVKQSFSH) are enriched in polar residues. Residues 81–141 (KANESEEAER…EARKKAEADA (61 aa)) show a composition bias toward basic and acidic residues. The span at 142 to 171 (SSKPAAARSKADDPATMDPAAAQAAEARGA) shows a compositional bias: low complexity. Composition is skewed to basic and acidic residues over residues 178 to 201 (PRKERTADRAQPRKEQKGKGDDRR) and 227 to 244 (RKQERERRKAMGGSQERE). Residues 329–497 (PRPPVITVMG…SIALQAEILE (169 aa)) enclose the tr-type G domain. The tract at residues 338–345 (GHVDHGKT) is G1. Residue 338–345 (GHVDHGKT) participates in GTP binding. Residues 363–367 (GITQH) are G2. The tract at residues 385 to 388 (DTPG) is G3. GTP is bound by residues 385–389 (DTPGH) and 439–442 (NKID). The tract at residues 439–442 (NKID) is G4. The G5 stretch occupies residues 475–477 (SAI).

The protein belongs to the TRAFAC class translation factor GTPase superfamily. Classic translation factor GTPase family. IF-2 subfamily.

The protein resides in the cytoplasm. In terms of biological role, one of the essential components for the initiation of protein synthesis. Protects formylmethionyl-tRNA from spontaneous hydrolysis and promotes its binding to the 30S ribosomal subunits. Also involved in the hydrolysis of GTP during the formation of the 70S ribosomal complex. This is Translation initiation factor IF-2 from Dinoroseobacter shibae (strain DSM 16493 / NCIMB 14021 / DFL 12).